A 441-amino-acid chain; its full sequence is Putative collagenous domain-containing protein R238 (441 aa).

The region spanning 164–199 is the Collagen-like domain; that stretch reads GCKGEKGIKGELGPKGNTGQKGDIGSKGDRGDKGEP. Residues 171–198 are disordered; sequence IKGELGPKGNTGQKGDIGSKGDRGDKGE. A compositionally biased stretch (basic and acidic residues) spans 187–198; the sequence is IGSKGDRGDKGE.

This is Putative collagenous domain-containing protein R238 from Acanthamoeba polyphaga (Amoeba).